Reading from the N-terminus, the 95-residue chain is Co-chaperonin GroES (95 aa).

The protein belongs to the GroES chaperonin family. In terms of assembly, heptamer of 7 subunits arranged in a ring. Interacts with the chaperonin GroEL.

It is found in the cytoplasm. In terms of biological role, together with the chaperonin GroEL, plays an essential role in assisting protein folding. The GroEL-GroES system forms a nano-cage that allows encapsulation of the non-native substrate proteins and provides a physical environment optimized to promote and accelerate protein folding. GroES binds to the apical surface of the GroEL ring, thereby capping the opening of the GroEL channel. The protein is Co-chaperonin GroES of Pelodictyon phaeoclathratiforme (strain DSM 5477 / BU-1).